We begin with the raw amino-acid sequence, 455 residues long: MWGGRFDEGIDARMARFNNSFPFDQRMWREDIRGSMAWARQLAQAGVISTEERDTLLTGLETVFAEFANDRFEARPTDEDIHTAIERRLGELVGAVAGKLHTGRSRNDQVATDVRLWTMGAIQRIDDGVRALQQALLTQAEAAGDALMPGYTHLQRAQPVLLAHWLLSHFWSAQRDRERLTDCAKRTSVLPLGSGAIAGTPLAIDRAALAADLGMAAISPNSIDAVSDRDFVAEFLFCAALIGIHLSRLAEDMIIYSSAEFGFVVLADAYSTGSSLMPQKKNPDSFELLRGKAGRLTGDLVTVLTVLKGIPSAYDKDLQEDKEPLFDAADTLELALPVAAGAVATARFRHDRMRAALDDAMLATDAADYLVARGVPFREAHHVVGRLVREAEQRGVALSALPLDILLAAHPACGSDILQVFDMDRSAAQRRVPGATAPGSVREQIIRARQCLGEH.

It belongs to the lyase 1 family. Argininosuccinate lyase subfamily.

The protein resides in the cytoplasm. The catalysed reaction is 2-(N(omega)-L-arginino)succinate = fumarate + L-arginine. It participates in amino-acid biosynthesis; L-arginine biosynthesis; L-arginine from L-ornithine and carbamoyl phosphate: step 3/3. In Roseiflexus castenholzii (strain DSM 13941 / HLO8), this protein is Argininosuccinate lyase.